We begin with the raw amino-acid sequence, 79 residues long: Small ribosomal subunit protein bS18 (79 aa).

Part of the 30S ribosomal subunit. Forms a tight heterodimer with protein bS6. Both N-terminus methionine truncation and retention have been observed for this protein. Post-translationally, may be methylated up to 6 times, on undetermined residues.

Its function is as follows. Binds as a heterodimer with protein bS6 to the central domain of the 16S rRNA, where it helps stabilize the platform of the 30S subunit. This Rhodopseudomonas palustris (strain ATCC BAA-98 / CGA009) protein is Small ribosomal subunit protein bS18.